We begin with the raw amino-acid sequence, 329 residues long: Cytosolic arginine sensor for mTORC1 subunit 1 (329 aa).

The residue at position 14 (Ser14) is a Phosphoserine; by PKB/AKT1. 2 ACT domains span residues 72–138 (AEAT…HTLA) and 260–321 (GELW…EVLQ). Residues 111–112 (SV), Gly274, 280–281 (IV), and 300–304 (TFNFD) each bind L-arginine.

Belongs to the GATS family. In terms of assembly, forms homodimers and heterodimers with CASTOR2. Interacts with the GATOR2 complex which is composed of MIOS, SEC13, SEH1L, WDR24 and WDR59; the interaction is negatively regulated by arginine. Interacts with TM4SF5; the interaction is positively regulated by leucine and is negatively regulated by arginine. Phosphorylation at Ser-14 by AKT1, promoting the interaction between CASTOR1 and RNF167. In terms of processing, ubiquitinated by RNF167 via 'Lys-29'-polyubiquitination, leading to its degradation, releasing the GATOR2 complex. Ubiquitination by RNF167 is promoted by phosphorylation at Ser-14 by AKT1. As to expression, widely expressed.

Its subcellular location is the cytoplasm. The protein localises to the cytosol. In terms of biological role, functions as an intracellular arginine sensor within the amino acid-sensing branch of the TORC1 signaling pathway. As a homodimer or a heterodimer with CASTOR2, binds and inhibits the GATOR subcomplex GATOR2 and thereby mTORC1. Binding of arginine to CASTOR1 allosterically disrupts the interaction of CASTOR1-containing dimers with GATOR2 which can in turn activate mTORC1 and the TORC1 signaling pathway. In Homo sapiens (Human), this protein is Cytosolic arginine sensor for mTORC1 subunit 1.